We begin with the raw amino-acid sequence, 277 residues long: Inner kinetochore subunit sim4 (277 aa).

Positions 96–138 (NNISDLKKNLHSNKKLEAVLKEELHQIKKFSSDLQSLKSSMGE) form a coiled coil.

It belongs to the CENP-K/MCM22 family. In terms of assembly, component of the inner kinetochore constitutive centromere-associated network (CCAN) (also known as central kinetochore Sim4 complex in fission yeast), which is composed of at least cnl2, cnp3, cnp20, fta1, fta2, fta3, fta4, fta6, fta7, mal2, mhf1, mhf2, mis6, mis15, mis17, sim4 and wip1. Interacts with mis6 and dad1.

The protein localises to the nucleus. It is found in the chromosome. Its subcellular location is the centromere. In terms of biological role, component of the kinetochore, a multiprotein complex that assembles on centromeric DNA and attaches chromosomes to spindle microtubules, mediating chromosome segregation and sister chromatid segregation during meiosis and mitosis. Component of the inner kinetochore constitutive centromere-associated network (CCAN), which serves as a structural platform for outer kinetochore assembly. This is Inner kinetochore subunit sim4 (sim4) from Schizosaccharomyces pombe (strain 972 / ATCC 24843) (Fission yeast).